The chain runs to 331 residues: Pantothenate kinase (331 aa).

109–116 is a binding site for ATP; it reads GSVAVGKS.

Belongs to the prokaryotic pantothenate kinase family.

It localises to the cytoplasm. It carries out the reaction (R)-pantothenate + ATP = (R)-4'-phosphopantothenate + ADP + H(+). It functions in the pathway cofactor biosynthesis; coenzyme A biosynthesis; CoA from (R)-pantothenate: step 1/5. The sequence is that of Pantothenate kinase from Rhizobium rhizogenes (strain K84 / ATCC BAA-868) (Agrobacterium radiobacter).